The primary structure comprises 210 residues: Thioredoxin-like 3-1, chloroplastic (210 aa).

A Thioredoxin domain is found at 81–210; it reads WRLKAFWSNI…EVRELINKFV (130 aa). Residues Cys-130 and Cys-133 each act as nucleophile in the active site. Cys-130 and Cys-133 are oxidised to a cystine.

The protein belongs to the thioredoxin family.

It localises to the plastid. It is found in the chloroplast stroma. Functionally, probable thiol-disulfide oxidoreductase that may participate in various redox reactions. The chain is Thioredoxin-like 3-1, chloroplastic (WCRKC1) from Arabidopsis thaliana (Mouse-ear cress).